A 206-amino-acid polypeptide reads, in one-letter code: Small ribosomal subunit protein uS4 (206 aa).

Residues 96-161 enclose the S4 RNA-binding domain; it reads RRLDNVVYRM…QGRIQAALAL (66 aa).

It belongs to the universal ribosomal protein uS4 family. In terms of assembly, part of the 30S ribosomal subunit. Contacts protein S5. The interaction surface between S4 and S5 is involved in control of translational fidelity.

Functionally, one of the primary rRNA binding proteins, it binds directly to 16S rRNA where it nucleates assembly of the body of the 30S subunit. Its function is as follows. With S5 and S12 plays an important role in translational accuracy. This chain is Small ribosomal subunit protein uS4, found in Legionella pneumophila (strain Corby).